The following is a 157-amino-acid chain: Crossover junction endodeoxyribonuclease RuvC (157 aa).

Active-site residues include Asp7, Glu66, and Asp139. Residues Asp7, Glu66, and Asp139 each coordinate Mg(2+).

This sequence belongs to the RuvC family. In terms of assembly, homodimer which binds Holliday junction (HJ) DNA. The HJ becomes 2-fold symmetrical on binding to RuvC with unstacked arms; it has a different conformation from HJ DNA in complex with RuvA. In the full resolvosome a probable DNA-RuvA(4)-RuvB(12)-RuvC(2) complex forms which resolves the HJ. It depends on Mg(2+) as a cofactor.

The protein resides in the cytoplasm. The enzyme catalyses Endonucleolytic cleavage at a junction such as a reciprocal single-stranded crossover between two homologous DNA duplexes (Holliday junction).. Its function is as follows. The RuvA-RuvB-RuvC complex processes Holliday junction (HJ) DNA during genetic recombination and DNA repair. Endonuclease that resolves HJ intermediates. Cleaves cruciform DNA by making single-stranded nicks across the HJ at symmetrical positions within the homologous arms, yielding a 5'-phosphate and a 3'-hydroxyl group; requires a central core of homology in the junction. The consensus cleavage sequence is 5'-(A/T)TT(C/G)-3'. Cleavage occurs on the 3'-side of the TT dinucleotide at the point of strand exchange. HJ branch migration catalyzed by RuvA-RuvB allows RuvC to scan DNA until it finds its consensus sequence, where it cleaves and resolves the cruciform DNA. This Helicobacter pylori (strain Shi470) protein is Crossover junction endodeoxyribonuclease RuvC.